The chain runs to 469 residues: MSIFPKISLRPEVENYLKEGFMNKEIVTALGKQEAERKFETLLKHLSHPPSFTTVRVNTHLASVQHVKNLLLDELQKQFNGLSVPILQHPDLQDVLLIPVIGPRKNIKKQQCEAIVGAQCGNAVLRGAHVYAPGIVSASQFMKAGDVISVYSDIKGKCKKGAKEFDGTKVFLGNGISELSRKEIFSGLPELKGMGIRMTEPVYLSPSFDSVLPRYLFLQNLPSALVSHVLNPQPGEKILDLCAAPGGKTTHIAALMHDQGEVIALDKIFNKVEKIKQNALLLGLNSIRAFCFDGTKAVKLDMVEDTEGEPPFLPESFDRILLDAPCSGMGQRPNMACTWSVKEVASYQPLQRKLFTAAVQLLKPEGVLVYSTCTITLAENEEQVAWALTKFPCLQLQPQEPQIGGEGMRGAGLSCEQLKQLQRFDPSAVPLPDTDMDSLREARREDMLRLANKDSIGFFIAKFVKCKST.

A PUA domain is found at 111 to 203 (QCEAIVGAQC…MGIRMTEPVY (93 aa)). S-adenosyl-L-methionine-binding positions include 242 to 248 (CAAPGGK), Asp266, Asp293, and Asp323. The Nucleophile role is filled by Cys373. The residue at position 419 (Lys419) is an N6-acetyllysine.

The protein belongs to the class I-like SAM-binding methyltransferase superfamily. RsmB/NOP family.

The protein resides in the cytoplasm. It carries out the reaction cytidine(72) in tRNA(Thr) + S-adenosyl-L-methionine = 5-methylcytidine(72) in tRNA(Thr) + S-adenosyl-L-homocysteine + H(+). The catalysed reaction is cytidine(72) in tRNA(Cys) + S-adenosyl-L-methionine = 5-methylcytidine(72) in tRNA(Cys) + S-adenosyl-L-homocysteine + H(+). Functionally, S-adenosyl-L-methionine-dependent methyltransferase that specifically methylates the C5 position of cytosine 72 in tRNA(Thr)(TGT) and tRNA(Cys)(GCA). In vitro also methylates tRNA(Thr)(AGT). Methylation requires, in the acceptor stem region, the presence of the 3'-CCA terminus, the target site C72, the discriminator base U73, and the second and third base pairs (2:71 and 3:70) in the tRNA substrates. The polypeptide is tRNA (cytosine(72)-C(5))-methyltransferase NSUN6 (Homo sapiens (Human)).